A 111-amino-acid chain; its full sequence is Ig kappa chain V region 3368 (111 aa).

The framework-1 stretch occupies residues A1 to C24. The tract at residues Q25 to A35 is complementarity-determining-1. The interval W36–Y50 is framework-2. The segment at R51–S57 is complementarity-determining-2. The framework-3 stretch occupies residues G58–C89. The segment at Q90–N101 is complementarity-determining-3. Residues F102 to K111 form a framework-4 region.

This chain is Ig kappa chain V region 3368, found in Oryctolagus cuniculus (Rabbit).